A 115-amino-acid chain; its full sequence is Large ribosomal subunit protein bL19 (115 aa).

This sequence belongs to the bacterial ribosomal protein bL19 family.

In terms of biological role, this protein is located at the 30S-50S ribosomal subunit interface and may play a role in the structure and function of the aminoacyl-tRNA binding site. The protein is Large ribosomal subunit protein bL19 of Francisella philomiragia subsp. philomiragia (strain ATCC 25017 / CCUG 19701 / FSC 153 / O#319-036).